The primary structure comprises 450 residues: Exodeoxyribonuclease 7 large subunit (450 aa).

This sequence belongs to the XseA family. Heterooligomer composed of large and small subunits.

It is found in the cytoplasm. The catalysed reaction is Exonucleolytic cleavage in either 5'- to 3'- or 3'- to 5'-direction to yield nucleoside 5'-phosphates.. Its function is as follows. Bidirectionally degrades single-stranded DNA into large acid-insoluble oligonucleotides, which are then degraded further into small acid-soluble oligonucleotides. The sequence is that of Exodeoxyribonuclease 7 large subunit from Listeria welshimeri serovar 6b (strain ATCC 35897 / DSM 20650 / CCUG 15529 / CIP 8149 / NCTC 11857 / SLCC 5334 / V8).